Reading from the N-terminus, the 318-residue chain is MNLWHATSPTIWQGRNDLAEADNALRLFQTVKLSPYFTPEEFSHYVALLGFECDEGVKRNQGRPGANQGPDYLRQSLANMASHKGHDKLVDLGSIRANPNQLSEAQQALSDAVTQCQCQNVRTLVLGGGHETAFAHGVGIYDAFPHQRVGIINFDAHLDLRRSPQPTSGTPFRQLAEYCQQHQRLFHYTCIGASLASNTQALVDEANRLNATIIWDNQCRETMLDKVQQQIQDILQQVDLIYMTIDLDVLPAYQMPAVSAPAALGLPLERLLQLIQPICQSGKLQAADLVELNPLFDIQGIGGRAAARLAWQLAHWWY.

Mn(2+)-binding residues include H130, D155, H157, D159, D246, and D248.

This sequence belongs to the arginase family. The cofactor is Mn(2+).

It catalyses the reaction N-formimidoyl-L-glutamate + H2O = formamide + L-glutamate. The protein operates within amino-acid degradation; L-histidine degradation into L-glutamate; L-glutamate from N-formimidoyl-L-glutamate (hydrolase route): step 1/1. In terms of biological role, catalyzes the conversion of N-formimidoyl-L-glutamate to L-glutamate and formamide. This is Formimidoylglutamase from Photorhabdus laumondii subsp. laumondii (strain DSM 15139 / CIP 105565 / TT01) (Photorhabdus luminescens subsp. laumondii).